Here is a 217-residue protein sequence, read N- to C-terminus: Nucleolar protein 12 (217 aa).

Residues 34–98 (GFHKRKVERK…LVTAKTESVQ (65 aa)) adopt a coiled-coil conformation. The disordered stretch occupies residues 122–217 (LGLPLPEQGD…MTGKARHNGE (96 aa)). Residues 130–141 (GDQDGSQEEEMS) show a composition bias toward acidic residues. Basic residues-rich tracts occupy residues 172–184 (AHSR…KHPR) and 201–217 (KTQR…HNGE).

This sequence belongs to the RRP17 family. Interacts with KIAA1191. In terms of tissue distribution, expressed in brain, lung, spleen, kidney and heart.

The protein resides in the nucleus. It is found in the nucleolus. It localises to the cytoplasm. Its function is as follows. Multifunctional RNA binding protein that plays a role in RNA metabolism and DNA maintenance. Participates in the resolution of DNA stress and the maintenance of genome integrity by localizing to sites of DNA insults. Also plays a role in proper nucleolar organization by limiting nucleolar size and regulating nucleolar number. Mechanistically, regulates the nucleolar levels of fibrillarin and nucleolin, two key players in pre-rRNA processing and ribosome assembly. This Mus musculus (Mouse) protein is Nucleolar protein 12 (Nol12).